The chain runs to 99 residues: DNA-directed RNA polymerase subunit omega (99 aa).

The protein belongs to the RNA polymerase subunit omega family. As to quaternary structure, the RNAP catalytic core consists of 2 alpha, 1 beta, 1 beta' and 1 omega subunit. When a sigma factor is associated with the core the holoenzyme is formed, which can initiate transcription.

The catalysed reaction is RNA(n) + a ribonucleoside 5'-triphosphate = RNA(n+1) + diphosphate. Functionally, promotes RNA polymerase assembly. Latches the N- and C-terminal regions of the beta' subunit thereby facilitating its interaction with the beta and alpha subunits. This is DNA-directed RNA polymerase subunit omega (rpoZ) from Xylella fastidiosa (strain 9a5c).